The following is a 433-amino-acid chain: MNRDTSPDLQYLSGFGNEFASEALPGALPVGQNSPQKAPYGLYAELLSGTAFTMARSELRRTWLYRIRPSALHPRFERLARQPLNGPLGGVTPNRLRWNPQPLPTEPTDFIEGWLPMVANSAADKPAGVSVYIYCANRSMERVFFNADGELLIVPEQGRLRIATELGLLEVEPQEIAVVPRGMKFRVELPDGQARGYIAENHGAPLRLPDLGPIGSNGLANPRDFLAPVAHYEEAEGPVQLVQKFLGEHWACELQHSPLDVVAWHGSNVPYKYDLRRFNTLGTVSFDHPDPSIFTVLTSPTSVHGLANMDFVIFPPRWMVAENTFRPPWFHRNLMNEFMGLISGAYDAKAEGFLPGGASLHGVMSAHGPDAETCEKAIAADLAPHKIDNTMAFMFETSQVLRPSLQALECPQLQADYDSCWATLPSTFNPNRR.

His288 serves as the catalytic Proton acceptor. Fe cation contacts are provided by His331 and Glu337. Positions 346 and 367 each coordinate homogentisate. Residue His367 participates in Fe cation binding.

It belongs to the homogentisate dioxygenase family. Hexamer; dimer of trimers. Fe cation is required as a cofactor.

The catalysed reaction is homogentisate + O2 = 4-maleylacetoacetate + H(+). The protein operates within amino-acid degradation; L-phenylalanine degradation; acetoacetate and fumarate from L-phenylalanine: step 4/6. Functionally, involved in the catabolism of homogentisate (2,5-dihydroxyphenylacetate or 2,5-OH-PhAc), a central intermediate in the degradation of phenylalanine and tyrosine. Catalyzes the oxidative ring cleavage of the aromatic ring of homogentisate to yield maleylacetoacetate. This chain is Homogentisate 1,2-dioxygenase, found in Pseudomonas putida (strain W619).